The sequence spans 307 residues: D-alanine--D-alanine ligase (307 aa).

Residues 105 to 304 (KMLWKGFGLP…FEQLVVKILE (200 aa)) enclose the ATP-grasp domain. An ATP-binding site is contributed by 135 to 190 (VERLGLPLMVKPSREGSSVGLTKVNAVEELKNAVDLALTHDDTVLIEEWLSGIEMT). Mg(2+) contacts are provided by Asp-258, Glu-271, and Asn-273.

This sequence belongs to the D-alanine--D-alanine ligase family. The cofactor is Mg(2+). Mn(2+) serves as cofactor.

The protein resides in the cytoplasm. The enzyme catalyses 2 D-alanine + ATP = D-alanyl-D-alanine + ADP + phosphate + H(+). It participates in cell wall biogenesis; peptidoglycan biosynthesis. Its function is as follows. Cell wall formation. The protein is D-alanine--D-alanine ligase of Mannheimia succiniciproducens (strain KCTC 0769BP / MBEL55E).